Here is a 397-residue protein sequence, read N- to C-terminus: Putative galactokinase (397 aa).

Ser78 contributes to the ATP binding site. The Proton acceptor role is filled by Asp182.

It belongs to the GHMP kinase family. GalK subfamily.

Its subcellular location is the cytoplasm. The catalysed reaction is alpha-D-galactose + ATP = alpha-D-galactose 1-phosphate + ADP + H(+). The protein operates within carbohydrate metabolism; galactose metabolism. Catalyzes the transfer of the gamma-phosphate of ATP to D-galactose to form alpha-D-galactose-1-phosphate (Gal-1-P). The sequence is that of Putative galactokinase (galK) from Treponema pallidum (strain Nichols).